The following is a 211-amino-acid chain: Large ribosomal subunit protein uL3 (211 aa).

It belongs to the universal ribosomal protein uL3 family. In terms of assembly, part of the 50S ribosomal subunit. Forms a cluster with proteins L14 and L19.

Its function is as follows. One of the primary rRNA binding proteins, it binds directly near the 3'-end of the 23S rRNA, where it nucleates assembly of the 50S subunit. The chain is Large ribosomal subunit protein uL3 from Desulfatibacillum aliphaticivorans.